A 268-amino-acid chain; its full sequence is 4-hydroxy-tetrahydrodipicolinate reductase (268 aa).

Residues 10 to 15 (GASGRM), Asp-36, 99 to 101 (GTT), and 123 to 126 (APNM) each bind NAD(+). His-156 (proton donor/acceptor) is an active-site residue. (S)-2,3,4,5-tetrahydrodipicolinate is bound at residue His-157. Lys-160 (proton donor) is an active-site residue. Residue 166 to 167 (GT) participates in (S)-2,3,4,5-tetrahydrodipicolinate binding.

It belongs to the DapB family.

It is found in the cytoplasm. It carries out the reaction (S)-2,3,4,5-tetrahydrodipicolinate + NAD(+) + H2O = (2S,4S)-4-hydroxy-2,3,4,5-tetrahydrodipicolinate + NADH + H(+). The enzyme catalyses (S)-2,3,4,5-tetrahydrodipicolinate + NADP(+) + H2O = (2S,4S)-4-hydroxy-2,3,4,5-tetrahydrodipicolinate + NADPH + H(+). The protein operates within amino-acid biosynthesis; L-lysine biosynthesis via DAP pathway; (S)-tetrahydrodipicolinate from L-aspartate: step 4/4. Functionally, catalyzes the conversion of 4-hydroxy-tetrahydrodipicolinate (HTPA) to tetrahydrodipicolinate. The protein is 4-hydroxy-tetrahydrodipicolinate reductase of Janthinobacterium sp. (strain Marseille) (Minibacterium massiliensis).